The sequence spans 122 residues: UPF0102 protein CPE1705 (122 aa).

Belongs to the UPF0102 family.

The sequence is that of UPF0102 protein CPE1705 from Clostridium perfringens (strain 13 / Type A).